A 455-amino-acid polypeptide reads, in one-letter code: Kynurenine 3-monooxygenase (455 aa).

Belongs to the aromatic-ring hydroxylase family. KMO subfamily. FAD is required as a cofactor.

The enzyme catalyses L-kynurenine + NADPH + O2 + H(+) = 3-hydroxy-L-kynurenine + NADP(+) + H2O. It functions in the pathway cofactor biosynthesis; NAD(+) biosynthesis; quinolinate from L-kynurenine: step 1/3. Functionally, catalyzes the hydroxylation of L-kynurenine (L-Kyn) to form 3-hydroxy-L-kynurenine (L-3OHKyn). Required for synthesis of quinolinic acid. This Xanthomonas oryzae pv. oryzae (strain PXO99A) protein is Kynurenine 3-monooxygenase.